The following is a 144-amino-acid chain: Transcription antitermination protein NusB (144 aa).

Belongs to the NusB family.

Functionally, involved in transcription antitermination. Required for transcription of ribosomal RNA (rRNA) genes. Binds specifically to the boxA antiterminator sequence of the ribosomal RNA (rrn) operons. This chain is Transcription antitermination protein NusB, found in Haemophilus influenzae (strain PittEE).